The following is a 140-amino-acid chain: Translation initiation factor 2 subunit beta (140 aa).

This sequence belongs to the eIF-2-beta/eIF-5 family. As to quaternary structure, heterotrimer composed of an alpha, a beta and a gamma chain.

Functionally, eIF-2 functions in the early steps of protein synthesis by forming a ternary complex with GTP and initiator tRNA. This chain is Translation initiation factor 2 subunit beta (eif2b), found in Pyrococcus horikoshii (strain ATCC 700860 / DSM 12428 / JCM 9974 / NBRC 100139 / OT-3).